Consider the following 564-residue polypeptide: Dihydroxy-acid dehydratase (564 aa).

Position 53 (cysteine 53) interacts with [2Fe-2S] cluster. A Mg(2+)-binding site is contributed by aspartate 85. Cysteine 126 serves as a coordination point for [2Fe-2S] cluster. Mg(2+) is bound by residues aspartate 127 and lysine 128. An N6-carboxylysine modification is found at lysine 128. A [2Fe-2S] cluster-binding site is contributed by cysteine 203. Glutamate 454 is a Mg(2+) binding site. Residue serine 480 is the Proton acceptor of the active site.

This sequence belongs to the IlvD/Edd family. Homodimer. [2Fe-2S] cluster is required as a cofactor. Requires Mg(2+) as cofactor.

The catalysed reaction is (2R)-2,3-dihydroxy-3-methylbutanoate = 3-methyl-2-oxobutanoate + H2O. It catalyses the reaction (2R,3R)-2,3-dihydroxy-3-methylpentanoate = (S)-3-methyl-2-oxopentanoate + H2O. It participates in amino-acid biosynthesis; L-isoleucine biosynthesis; L-isoleucine from 2-oxobutanoate: step 3/4. It functions in the pathway amino-acid biosynthesis; L-valine biosynthesis; L-valine from pyruvate: step 3/4. Functions in the biosynthesis of branched-chain amino acids. Catalyzes the dehydration of (2R,3R)-2,3-dihydroxy-3-methylpentanoate (2,3-dihydroxy-3-methylvalerate) into 2-oxo-3-methylpentanoate (2-oxo-3-methylvalerate) and of (2R)-2,3-dihydroxy-3-methylbutanoate (2,3-dihydroxyisovalerate) into 2-oxo-3-methylbutanoate (2-oxoisovalerate), the penultimate precursor to L-isoleucine and L-valine, respectively. This Clavibacter michiganensis subsp. michiganensis (strain NCPPB 382) protein is Dihydroxy-acid dehydratase.